Reading from the N-terminus, the 292-residue chain is Carbapenem-hydrolyzing beta-lactamase transcriptional activator (292 aa).

The HTH lysR-type domain maps to 5-62 (IPLNALRAFEASARYLNFTKAGLELHVSQAAVSQHVRTLEAILGVNLFKRLPRGLQLT). The segment at residues 22-41 (FTKAGLELHVSQAAVSQHVR) is a DNA-binding region (H-T-H motif).

The protein belongs to the LysR transcriptional regulatory family.

This protein is a positive regulator of gene expression of carbapenem-hydrolyzing beta-lactamase (smeA). Seems to also be a repressor of its own transcription. The sequence is that of Carbapenem-hydrolyzing beta-lactamase transcriptional activator (smeR) from Serratia marcescens.